The following is a 427-amino-acid chain: Glutamate-1-semialdehyde 2,1-aminomutase (427 aa).

Lys265 is subject to N6-(pyridoxal phosphate)lysine.

The protein belongs to the class-III pyridoxal-phosphate-dependent aminotransferase family. HemL subfamily. As to quaternary structure, homodimer. It depends on pyridoxal 5'-phosphate as a cofactor.

Its subcellular location is the cytoplasm. The enzyme catalyses (S)-4-amino-5-oxopentanoate = 5-aminolevulinate. It participates in porphyrin-containing compound metabolism; protoporphyrin-IX biosynthesis; 5-aminolevulinate from L-glutamyl-tRNA(Glu): step 2/2. The polypeptide is Glutamate-1-semialdehyde 2,1-aminomutase (Pseudomonas fluorescens (strain Pf0-1)).